A 740-amino-acid chain; its full sequence is Leucine-rich repeat neuronal protein 4 (740 aa).

The signal sequence occupies residues 1-18 (MRQTLPLLLLTVLRPSWA). The Extracellular portion of the chain corresponds to 19 to 679 (DPPQEKVPLF…PCAAFTTKPS (661 aa)). N-linked (GlcNAc...) asparagine glycosylation occurs at Asn42. 10 LRR repeats span residues 51 to 74 (LPAA…GCLP), 75 to 97 (RTLR…ELGH), 98 to 123 (LEQL…GPAG), 125 to 144 (HTLD…TGPA), 145 to 168 (LSSL…AFAC), 174 to 197 (LLNL…AFAG), 203 to 226 (LVTL…WIRD), 228 to 251 (PKLT…IFKM), 253 to 276 (PNLQ…IFQD), and 277 to 300 (TPHL…TLDS). Asn176 carries N-linked (GlcNAc...) asparagine glycosylation. 3 N-linked (GlcNAc...) asparagine glycosylation sites follow: Asn289, Asn379, and Asn442. Residues 389 to 517 (VAPSAAPATR…QAPNPSLSEG (129 aa)) are disordered. Composition is skewed to polar residues over residues 430–454 (APST…STTR) and 490–514 (WDRS…NPSL). The Fibronectin type-III domain maps to 579-679 (IPDPPRLQGV…PCAAFTTKPS (101 aa)). N-linked (GlcNAc...) asparagine glycosylation occurs at Asn622. The chain crosses the membrane as a helical span at residues 680-700 (FALLLSGLCAASGLLLASTVV). Topologically, residues 701–740 (LSACLCRRGQTLGLQRCDTHLVAYKNPAFDDYPLGLQTVS) are cytoplasmic.

It localises to the membrane. Its function is as follows. May play an important role in hippocampus-dependent long-lasting memory. This is Leucine-rich repeat neuronal protein 4 (LRRN4) from Homo sapiens (Human).